A 460-amino-acid polypeptide reads, in one-letter code: A-type ATP synthase subunit B (460 aa).

This sequence belongs to the ATPase alpha/beta chains family. Has multiple subunits with at least A(3), B(3), C, D, E, F, H, I and proteolipid K(x).

It is found in the cell membrane. In terms of biological role, component of the A-type ATP synthase that produces ATP from ADP in the presence of a proton gradient across the membrane. The B chain is a regulatory subunit. In Thermofilum pendens (strain DSM 2475 / Hrk 5), this protein is A-type ATP synthase subunit B.